Consider the following 682-residue polypeptide: MSRKQLALFEPVLLVQALTDAVKKLSPRAQWRNPVMFVVWAGSVLTTLLTLAMVTGQIAGSALFTGIISLWLWFTVLFANFAEALAEGRSKAQANSLKGVKKTAFARRLRAPRHDAQADNVPAAELRKGDIVLVKAGDIIPCDGEVIEGGASVDESAITGESAPVIRESGGDFASVTGGTRILSDWLVIACSVNPGETFLDRMIAMVEGAQRRKTPNEIALTILLIALTIVFLLATATLWPFSAWGGNAVSVTVLVALLVCLIPTTIGGLLSAIGVAGMSRMLGANVIATSGRAVEAAGDVDVLLLDKTGTITLGNRQASDFIPARGVDERTLADAAQLASLADETPEGRSIVILAKQRFNLRERDVQSLHATFVPFTAQSRMSGINIDNRMIRKGSVDAIRRHVESNGGHFPADVEQNVENVARLGATPLVVVEGARILGVIALKDIVKGGIKERFAQLRKMGIKTVMITGDNRLTAAAIAAEAGVDDFLAEATPEAKLALIRQYQAEGRLVAMTGDGTNDAPALAQADVAVAMNSGTQAAKEAGNMVDLDSNPTKLIEVVHIGKQMLMTRGSLTTFSIANDVAKYFAIIPAAFAATYPQLNALNVMGLHSPNSAILSAVIFNALIIIFLIPLALKGVSYKPLSASAMLRRNLWIYGLGGLVVPFIGIKVIDVLLTLLGLA.

A run of 4 helical transmembrane segments spans residues 34-54 (PVMF…LAMV), 58-78 (IAGS…TVLF), 219-239 (IALT…TATL), and 254-274 (VLVA…LSAI). D307 (4-aspartylphosphate intermediate) is an active-site residue. Residues D344, E348, 377–384 (FTAQSRMS), and K395 each bind ATP. Mg(2+) contacts are provided by D518 and D522. The next 3 helical transmembrane spans lie at 588 to 608 (FAII…LNVM), 616 to 636 (AILS…PLAL), and 662 to 682 (LVVP…LGLA).

Belongs to the cation transport ATPase (P-type) (TC 3.A.3) family. Type IA subfamily. The system is composed of three essential subunits: KdpA, KdpB and KdpC.

Its subcellular location is the cell inner membrane. The enzyme catalyses K(+)(out) + ATP + H2O = K(+)(in) + ADP + phosphate + H(+). Its function is as follows. Part of the high-affinity ATP-driven potassium transport (or Kdp) system, which catalyzes the hydrolysis of ATP coupled with the electrogenic transport of potassium into the cytoplasm. This subunit is responsible for energy coupling to the transport system and for the release of the potassium ions to the cytoplasm. The chain is Potassium-transporting ATPase ATP-binding subunit from Salmonella newport (strain SL254).